A 274-amino-acid chain; its full sequence is Elongation factor Ts (274 aa).

An involved in Mg(2+) ion dislocation from EF-Tu region spans residues 79 to 82; sequence TDFV.

The protein belongs to the EF-Ts family.

It localises to the cytoplasm. Its function is as follows. Associates with the EF-Tu.GDP complex and induces the exchange of GDP to GTP. It remains bound to the aminoacyl-tRNA.EF-Tu.GTP complex up to the GTP hydrolysis stage on the ribosome. The sequence is that of Elongation factor Ts from Azobacteroides pseudotrichonymphae genomovar. CFP2.